We begin with the raw amino-acid sequence, 208 residues long: Heat shock protein 26 (208 aa).

A phosphoserine mark is found at Ser44, Ser52, and Ser58. One can recognise a sHSP domain in the interval 71-179; it reads ANRNDIHWPA…KSKERIIQIQ (109 aa). The disordered stretch occupies residues 187-208; that stretch reads NVKANESEVKGKENGAPNGKDK. Over residues 191–208 the composition is skewed to basic and acidic residues; that stretch reads NESEVKGKENGAPNGKDK.

Belongs to the small heat shock protein (HSP20) family.

The chain is Heat shock protein 26 (Hsp26) from Drosophila melanogaster (Fruit fly).